The chain runs to 379 residues: Homoserine O-succinyltransferase (379 aa).

The region spanning 51 to 360 (NAVLICHALS…DAPQGHDAFL (310 aa)) is the AB hydrolase-1 domain. Ser-157 (nucleophile) is an active-site residue. Position 227 (Arg-227) interacts with substrate. Residues Asp-323 and His-356 contribute to the active site. Residue Asp-357 coordinates substrate.

Belongs to the AB hydrolase superfamily. MetX family. Homodimer.

Its subcellular location is the cytoplasm. It carries out the reaction L-homoserine + succinyl-CoA = O-succinyl-L-homoserine + CoA. The protein operates within amino-acid biosynthesis; L-methionine biosynthesis via de novo pathway; O-succinyl-L-homoserine from L-homoserine: step 1/1. In terms of biological role, transfers a succinyl group from succinyl-CoA to L-homoserine, forming succinyl-L-homoserine. This is Homoserine O-succinyltransferase from Stutzerimonas stutzeri (strain A1501) (Pseudomonas stutzeri).